Consider the following 124-residue polypeptide: Colorectal cancer-associated protein 1 (124 aa).

Residues 77 to 97 traverse the membrane as a helical segment; the sequence is LYGCFCVGLVSGMAISVLLLA.

As to expression, expressed in gastrointestinal and immune tissue, as well as prostate, testis and ovary. Expressed in lamina propria and eosinophils but not in epithelial cells. Expression is greater in benign adjacent tissues than in colon tumors.

It is found in the membrane. The polypeptide is Colorectal cancer-associated protein 1 (COLCA1) (Homo sapiens (Human)).